The primary structure comprises 411 residues: Arginine deiminase (411 aa).

Catalysis depends on cysteine 401, which acts as the Amidino-cysteine intermediate.

The protein belongs to the arginine deiminase family.

It is found in the cytoplasm. It catalyses the reaction L-arginine + H2O = L-citrulline + NH4(+). It functions in the pathway amino-acid degradation; L-arginine degradation via ADI pathway; carbamoyl phosphate from L-arginine: step 1/2. This chain is Arginine deiminase, found in Streptococcus equi subsp. zooepidemicus (strain MGCS10565).